We begin with the raw amino-acid sequence, 310 residues long: Malate dehydrogenase (310 aa).

NAD(+) contacts are provided by residues 7–13 (GAAGGIG) and Asp-34. 2 residues coordinate substrate: Arg-81 and Arg-87. Residues Asn-94 and 117-119 (ITN) contribute to the NAD(+) site. Substrate-binding residues include Asn-119 and Arg-153. Catalysis depends on His-177, which acts as the Proton acceptor. Residue Met-227 participates in NAD(+) binding.

The protein belongs to the LDH/MDH superfamily. MDH type 1 family. Homodimer.

The catalysed reaction is (S)-malate + NAD(+) = oxaloacetate + NADH + H(+). Catalyzes the reversible oxidation of malate to oxaloacetate. The protein is Malate dehydrogenase of Idiomarina loihiensis (strain ATCC BAA-735 / DSM 15497 / L2-TR).